The sequence spans 86 residues: Large ribosomal subunit protein bL27 (86 aa).

The interval 1 to 24 (MAHKKGTGSTRNGRDSNSKRLGVK) is disordered.

The protein belongs to the bacterial ribosomal protein bL27 family.

The sequence is that of Large ribosomal subunit protein bL27 from Prochlorococcus marinus (strain AS9601).